The chain runs to 269 residues: CCAAT/enhancer-binding protein delta (269 aa).

Disordered regions lie at residues 1-48, 97-133, and 151-219; these read MSAA…PGAA, PLELLPGGPARPLGPGPAAPRLLKREPDWGDGDAPGS, and AAGQ…NQEM. N-acetylserine is present on S2. Composition is skewed to low complexity over residues 36 to 48 and 97 to 107; these read GAEPGALGEPGAA and PLELLPGGPAR. A Glycyl lysine isopeptide (Lys-Gly) (interchain with G-Cter in SUMO) cross-link involves residue K120. Positions 155–175 are enriched in pro residues; sequence PTPPTSPEPPRSSPRQTPAPG. The span at 177–201 shows a compositional bias: basic and acidic residues; that stretch reads AREKSAGKRGPDRGSPEYRQRRERN. Residues 191 to 254 enclose the bZIP domain; the sequence is SPEYRQRRER…AGLRQFFKQL (64 aa). Positions 195 to 222 are basic motif; it reads RQRRERNNIAVRKSRDKAKRRNQEMQQK. Positions 226-254 are leucine-zipper; it reads LSAENEKLHQRVEQLTRDLAGLRQFFKQL.

This sequence belongs to the bZIP family. C/EBP subfamily. As to quaternary structure, binds DNA as a homodimer and as a heterodimer. Can form stable heterodimers with CEBPB. Can form stable heterodimers with CEBPA and CEBPE. Directly interacts with SPI1/PU.1; this interaction does not affect DNA-binding properties of each partner. Interacts with PRDM16.

It is found in the nucleus. Transcription activator that recognizes two different DNA motifs: the CCAAT homology common to many promoters and the enhanced core homology common to many enhancers. Important transcription factor regulating the expression of genes involved in immune and inflammatory responses. Transcriptional activator that enhances IL6 transcription alone and as heterodimer with CEBPB. The protein is CCAAT/enhancer-binding protein delta (CEBPD) of Homo sapiens (Human).